A 229-amino-acid chain; its full sequence is Flagellar L-ring protein (229 aa).

An N-terminal signal peptide occupies residues 1-23 (MLSRLGARVLYCLAGLALLASGG). A lipid anchor (N-palmitoyl cysteine) is attached at Cys-24. Cys-24 carries S-diacylglycerol cysteine lipidation.

Belongs to the FlgH family. As to quaternary structure, the basal body constitutes a major portion of the flagellar organelle and consists of four rings (L,P,S, and M) mounted on a central rod.

The protein resides in the cell outer membrane. It localises to the bacterial flagellum basal body. In terms of biological role, assembles around the rod to form the L-ring and probably protects the motor/basal body from shearing forces during rotation. The sequence is that of Flagellar L-ring protein from Cupriavidus pinatubonensis (strain JMP 134 / LMG 1197) (Cupriavidus necator (strain JMP 134)).